The following is a 174-amino-acid chain: B3 domain-containing protein At3g06220 (174 aa).

A DNA-binding region (TF-B3) is located at residues Pro-8 to Gly-101. The segment at Glu-114–Tyr-174 is disordered. Composition is skewed to acidic residues over residues Glu-139–Ser-150 and Glu-164–Tyr-174.

Its subcellular location is the nucleus. This chain is B3 domain-containing protein At3g06220, found in Arabidopsis thaliana (Mouse-ear cress).